Consider the following 464-residue polypeptide: Asparagine--tRNA ligase (464 aa).

Belongs to the class-II aminoacyl-tRNA synthetase family. In terms of assembly, homodimer.

The protein resides in the cytoplasm. The catalysed reaction is tRNA(Asn) + L-asparagine + ATP = L-asparaginyl-tRNA(Asn) + AMP + diphosphate + H(+). The polypeptide is Asparagine--tRNA ligase (Acetivibrio thermocellus (strain ATCC 27405 / DSM 1237 / JCM 9322 / NBRC 103400 / NCIMB 10682 / NRRL B-4536 / VPI 7372) (Clostridium thermocellum)).